The primary structure comprises 108 residues: UPF0251 protein PF0620 (108 aa).

This sequence belongs to the UPF0251 family.

In Pyrococcus furiosus (strain ATCC 43587 / DSM 3638 / JCM 8422 / Vc1), this protein is UPF0251 protein PF0620.